The sequence spans 376 residues: Putative transcription factor egl-18 (376 aa).

4 disordered regions span residues Met1–Cys33, Asn65–Phe122, Met148–Pro197, and Ala240–Ala264. The segment covering Thr9 to Asp27 has biased composition (basic and acidic residues). Low complexity-rich tracts occupy residues Leu68 to Pro89 and Gln165 to Ser175. Residues Val176–Asp195 are compositionally biased toward basic and acidic residues. Residues Thr241–Ser250 show a composition bias toward polar residues. The GATA-type zinc-finger motif lies at Cys266 to Cys290.

As to expression, expressed in differentiated seam cells. Expressed in the head and trunk.

Its subcellular location is the nucleus. In terms of biological role, probable transcription factor. Involved in embryonic development and in vulval development in larvae, acting redundantly, at least in part, with elt-6. Perhaps acting together with elt-6, may form a positive feedback loop to initiate and maintain lin-39 gene expression to ensure proper vulval precursor cell (VPC) fate specification. Together with elt-6, acts as a downstream target of the Wnt/beta-catenin asymmetry pathway, required to adopt or maintain the seam cell fate. Required in seam cells, acting redundantly with elt-6, to promote production of alae, expression of several seam-specific genes and maintenance of seam cells in an unfused state. Plays a role in longevity. May form a transcriptional circuit with GATA factors elt-3 and elt-6. This Caenorhabditis elegans protein is Putative transcription factor egl-18.